We begin with the raw amino-acid sequence, 3084 residues long: Protein prune homolog 2 (3084 aa).

M1 carries the post-translational modification N-acetylmethionine. Residues 109–111 (GSH) carry the DHH motif motif. 18 disordered regions span residues 394–417 (QPSS…QADG), 430–465 (TIRS…PGFD), 500–536 (ASEQ…PKGL), 672–733 (EQES…QKEE), 811–837 (KNTW…MGQS), 861–907 (EIWG…KATG), 947–1080 (SASN…DDPS), 1224–1316 (NMPS…GQSE), 1338–1395 (SGVN…LEVE), 1502–1543 (MNST…DLHD), 1600–1652 (GFGK…TTKR), 1776–1799 (ETGT…DPDK), 1836–1886 (GELE…GDKS), 1961–1980 (DENG…QENQ), 2071–2196 (ILTH…NPEV), 2410–2782 (MLLS…SHPR), 2797–2816 (QSEG…EIDI), and 2825–2859 (DEAD…AEEE). Residues 501–511 (SEQSQPSSHSA) are compositionally biased toward polar residues. Basic and acidic residues-rich tracts occupy residues 682–696 (PWKD…RRTS) and 723–733 (GNKEAQDQKEE). Composition is skewed to polar residues over residues 811–828 (KNTW…SGQE) and 865–891 (KNNS…NNSK). Low complexity predominate over residues 962–975 (TNYSTSDSYTSPTY). Residues 977–999 (GDEKEIANKPVDKDNGFEAKDAE) are compositionally biased toward basic and acidic residues. Residues 1009 to 1019 (ATSSQQSQRNR) are compositionally biased toward polar residues. The span at 1034 to 1063 (HTEDKPEGNDAHHPDSDALKTEHAEDKNAS) shows a compositional bias: basic and acidic residues. A compositionally biased stretch (low complexity) spans 1071–1080 (SSPSSYDDPS). Over residues 1248–1261 (SPRHSNGKDSHMLE) the composition is skewed to basic and acidic residues. Residues 1265-1294 (LSESGGLTSQPVNQDTWGDSQGDTASSVTG) are compositionally biased toward polar residues. Positions 1350–1366 (KPRDQEFSSSDAFEHQD) are enriched in basic and acidic residues. Residues 1368–1378 (SSASGKISSLS) show a composition bias toward low complexity. Composition is skewed to polar residues over residues 1779 to 1792 (TMDT…STEA), 1854 to 1869 (PIQN…STNP), and 1965 to 1980 (CVST…QENQ). Basic and acidic residues predominate over residues 2089 to 2103 (VCHDSEGEQKMEKHT). Low complexity predominate over residues 2162–2174 (SSKPASSRSSPEP). Composition is skewed to basic and acidic residues over residues 2416–2428 (PDHR…ETNI), 2506–2525 (KQTE…EDHQ), and 2535–2553 (SHEK…RENI). Positions 2569 to 2584 (PETQLSGTPDTCQSEF) are enriched in polar residues. The segment covering 2595–2606 (RMSSSSNHESAS) has biased composition (low complexity). The span at 2607–2617 (LENPAQDQSWM) shows a compositional bias: polar residues. Over residues 2653–2664 (KGPKSQVLERNK) the composition is skewed to basic and acidic residues. Over residues 2806-2816 (DNLDSPDEIDI) the composition is skewed to acidic residues. The span at 2840–2849 (ANKSSGQESE) shows a compositional bias: polar residues. One can recognise a CRAL-TRIO domain in the interval 2879–3040 (DMKVIEPYRR…SIIKYDEEKS (162 aa)).

This sequence belongs to the PPase class C family. Prune subfamily.

The protein localises to the cytoplasm. In terms of biological role, may play an important role in regulating differentiation, survival and aggressiveness of the tumor cells. The sequence is that of Protein prune homolog 2 (Prune2) from Mus musculus (Mouse).